The primary structure comprises 150 residues: Troponin C, isoform 1 (150 aa).

Met-1 carries the N-acetylmethionine modification. 4 EF-hand domains span residues 7 to 42 (DQVQ…MGVK), 43 to 78 (ISDR…FLSE), 83 to 118 (ALKK…LDNK), and 119 to 150 (LTED…MMNG). Ca(2+) is bound by residues Asp-56, Asp-58, Ser-60, Glu-62, and Glu-67. 5 residues coordinate Ca(2+): Asp-132, Asp-134, Ser-136, Thr-138, and Glu-143.

It belongs to the troponin C family.

Troponin is the central regulatory protein of striated muscle contraction. Tn consists of three components: Tn-I which is the inhibitor of actomyosin ATPase, Tn-T which contains the binding site for tropomyosin and Tn-C. The binding of calcium to Tn-C abolishes the inhibitory action of Tn on actin filaments. This is Troponin C, isoform 1 from Homarus americanus (American lobster).